The following is a 256-amino-acid chain: Floral homeotic protein APETALA 1 (256 aa).

The region spanning 1–61 (MGRGRVQLKR…GKLFEYSTDS (61 aa)) is the MADS-box domain. One can recognise a K-box domain in the interval 88-178 (NTNWSMEYNR…SKQIKEREKV (91 aa)). Residues 180-206 (RAQQEQWDQQNHGQNMPPPPPPQEHQI) are disordered.

As to quaternary structure, homodimer capable of binding to CArG-box sequences.

It localises to the nucleus. Its function is as follows. Transcription factor that promotes early floral meristem identity in synergy with LEAFY. Displays a redundant function with CAULIFLOWER in the up-regulation of LEAFY. Required subsequently for the transition of an inflorescence meristem into a floral meristem, and for the normal development of sepals and petals in flowers. Regulates positively B class homeotic proteins. The protein is Floral homeotic protein APETALA 1 (AP1) of Brassica rapa subsp. pekinensis (Chinese cabbage).